Reading from the N-terminus, the 466-residue chain is Myocardial zonula adherens protein (466 aa).

Polar residues predominate over residues 1–10 (MLRSTSTVTL). The signal sequence occupies residues 1-20 (MLRSTSTVTLLSGGAARTPG). Residues 1-23 (MLRSTSTVTLLSGGAARTPGAPS) are disordered. 2 coiled-coil regions span residues 96–142 (QLKE…SHAQ) and 174–418 (LQKT…TQAK). Residues 424-425 (RE) carry the Required for DYNLL1-binding motif.

Belongs to the MYZAP family. Interacts with DSP, MPRIP and TJP1/ZO1. Interaction with MPRIP inhibits the activation of transcription factor SRF. Interacts with GRIN1. Interacts with DYNLL1. Detected in heart, liver, skeletal muscle, placenta, small intestine, lung, prostate and testis. Expressed in arrector pili muscle (at protein level).

Its subcellular location is the cytoplasm. It localises to the cytoskeleton. It is found in the cell membrane. The protein localises to the myofibril. The protein resides in the sarcomere. Its subcellular location is the i band. It localises to the z line. It is found in the cell junction. In terms of biological role, plays a role in cellular signaling via Rho-related GTP-binding proteins and subsequent activation of transcription factor SRF. Targets TJP1 to cell junctions. In cortical neurons, may play a role in glutaminergic signal transduction through interaction with the NMDA receptor subunit GRIN1. This is Myocardial zonula adherens protein (MYZAP) from Homo sapiens (Human).